We begin with the raw amino-acid sequence, 441 residues long: 23S rRNA (uracil(1939)-C(5))-methyltransferase RlmD (441 aa).

The TRAM domain maps to 10-68 (KPLKQQSLVLDITAMDHHGRGIAKHNNKVCFVSNALPNEQVKATIIADKARYSEAQTHK). Residues C81, C87, C90, and C169 each coordinate [4Fe-4S] cluster. Residues Q274, F303, N308, E324, D351, and D372 each contribute to the S-adenosyl-L-methionine site. C398 functions as the Nucleophile in the catalytic mechanism.

It belongs to the class I-like SAM-binding methyltransferase superfamily. RNA M5U methyltransferase family. RlmD subfamily.

The catalysed reaction is uridine(1939) in 23S rRNA + S-adenosyl-L-methionine = 5-methyluridine(1939) in 23S rRNA + S-adenosyl-L-homocysteine + H(+). Catalyzes the formation of 5-methyl-uridine at position 1939 (m5U1939) in 23S rRNA. The chain is 23S rRNA (uracil(1939)-C(5))-methyltransferase RlmD from Pseudoalteromonas translucida (strain TAC 125).